The following is a 458-amino-acid chain: Argininosuccinate lyase (458 aa).

This sequence belongs to the lyase 1 family. Argininosuccinate lyase subfamily.

Its subcellular location is the cytoplasm. The catalysed reaction is 2-(N(omega)-L-arginino)succinate = fumarate + L-arginine. It participates in amino-acid biosynthesis; L-arginine biosynthesis; L-arginine from L-ornithine and carbamoyl phosphate: step 3/3. The polypeptide is Argininosuccinate lyase (Heliobacterium mobile (Heliobacillus mobilis)).